A 380-amino-acid chain; its full sequence is Queuine tRNA-ribosyltransferase (380 aa).

The active-site Proton acceptor is Asp-96. Substrate-binding positions include 96-100 (DSGGF), Asp-150, Gln-193, and Gly-220. The interval 251-257 (GVGAPDS) is RNA binding. Residue Asp-270 is the Nucleophile of the active site. Residues 275–279 (TRIAR) are RNA binding; important for wobble base 34 recognition. Zn(2+)-binding residues include Cys-308, Cys-310, Cys-313, and His-339.

It belongs to the queuine tRNA-ribosyltransferase family. Homodimer. Within each dimer, one monomer is responsible for RNA recognition and catalysis, while the other monomer binds to the replacement base PreQ1. Requires Zn(2+) as cofactor.

The catalysed reaction is 7-aminomethyl-7-carbaguanine + guanosine(34) in tRNA = 7-aminomethyl-7-carbaguanosine(34) in tRNA + guanine. The protein operates within tRNA modification; tRNA-queuosine biosynthesis. Catalyzes the base-exchange of a guanine (G) residue with the queuine precursor 7-aminomethyl-7-deazaguanine (PreQ1) at position 34 (anticodon wobble position) in tRNAs with GU(N) anticodons (tRNA-Asp, -Asn, -His and -Tyr). Catalysis occurs through a double-displacement mechanism. The nucleophile active site attacks the C1' of nucleotide 34 to detach the guanine base from the RNA, forming a covalent enzyme-RNA intermediate. The proton acceptor active site deprotonates the incoming PreQ1, allowing a nucleophilic attack on the C1' of the ribose to form the product. After dissociation, two additional enzymatic reactions on the tRNA convert PreQ1 to queuine (Q), resulting in the hypermodified nucleoside queuosine (7-(((4,5-cis-dihydroxy-2-cyclopenten-1-yl)amino)methyl)-7-deazaguanosine). The chain is Queuine tRNA-ribosyltransferase from Streptococcus pyogenes serotype M1.